The sequence spans 201 residues: Probable thymidylate kinase (201 aa).

10–17 lines the ATP pocket; the sequence is GIDGSGKS.

Belongs to the thymidylate kinase family.

It carries out the reaction dTMP + ATP = dTDP + ADP. The chain is Probable thymidylate kinase from Methanococcoides burtonii (strain DSM 6242 / NBRC 107633 / OCM 468 / ACE-M).